Here is a 383-residue protein sequence, read N- to C-terminus: tRNA-specific 2-thiouridylase MnmA (383 aa).

ATP-binding positions include 30-37 and Leu56; that span reads GLSGGVDS. The Nucleophile role is filled by Cys117. The cysteines at positions 117 and 216 are disulfide-linked. Gly142 provides a ligand contact to ATP. The segment at 166–168 is interaction with tRNA; it reads KDQ. Residue Cys216 is the Cysteine persulfide intermediate of the active site. An interaction with tRNA region spans residues 321–322; that stretch reads RY.

This sequence belongs to the MnmA/TRMU family.

The protein localises to the cytoplasm. The enzyme catalyses S-sulfanyl-L-cysteinyl-[protein] + uridine(34) in tRNA + AH2 + ATP = 2-thiouridine(34) in tRNA + L-cysteinyl-[protein] + A + AMP + diphosphate + H(+). Functionally, catalyzes the 2-thiolation of uridine at the wobble position (U34) of tRNA, leading to the formation of s(2)U34. The chain is tRNA-specific 2-thiouridylase MnmA from Synechococcus sp. (strain CC9605).